The primary structure comprises 277 residues: Intercellular adhesion molecule 2 (277 aa).

The signal sequence occupies residues 1–22 (MSSFACWSLSLLILFYSPGSGE). The Extracellular portion of the chain corresponds to 23-222 (KAFEVYIWSE…EVYEPMQDNQ (200 aa)). Ig-like C2-type domains lie at 39–98 (TESW…CSGK) and 127–196 (GEDF…LDLR). N-linked (GlcNAc...) asparagine glycosylation is found at asparagine 45, asparagine 82, asparagine 158, asparagine 176, and asparagine 186. Cystine bridges form between cysteine 46-cysteine 91, cysteine 50-cysteine 95, and cysteine 134-cysteine 189. A helical transmembrane segment spans residues 223–247 (MVIIIVVVSILLFLFVTSVLLCFIF). Residues 248–277 (GQHWHRRRTGTYGVLAAWRRLPRAFRARPV) lie on the Cytoplasmic side of the membrane. The tract at residues 250–277 (HWHRRRTGTYGVLAAWRRLPRAFRARPV) is required for interaction with EZR, MSN and RDX and co-localization to microvilli.

Belongs to the immunoglobulin superfamily. ICAM family. Interacts with RDX, EZR and MSN. As to expression, expressed in endothelial cells and leukocytes. High levels found in lung.

Its subcellular location is the membrane. The protein resides in the cell projection. It is found in the microvillus. In terms of biological role, ICAM proteins are ligands for the leukocyte adhesion protein LFA-1 (integrin alpha-L/beta-2). ICAM2 may play a role in lymphocyte recirculation by blocking LFA-1-dependent cell adhesion. It mediates adhesive interactions important for antigen-specific immune response, NK-cell mediated clearance, lymphocyte recirculation, and other cellular interactions important for immune response and surveillance. This Mus musculus (Mouse) protein is Intercellular adhesion molecule 2 (Icam2).